The sequence spans 173 residues: Mesencephalic astrocyte-derived neurotrophic factor homolog (173 aa).

The signal sequence occupies residues 1–22 (MKTTHLVLVLCFLAGVAQTTLA). Intrachain disulfides connect C28/C114, C31/C103, C61/C72, and C148/C151.

This sequence belongs to the ARMET family.

It is found in the secreted. In terms of biological role, required during the maturation of the embryonic nervous system for maintenance of neuronal and cuticular connectivity. Essential for maintenance of dopaminergic neurons and dopamine levels. The chain is Mesencephalic astrocyte-derived neurotrophic factor homolog from Drosophila persimilis (Fruit fly).